The sequence spans 432 residues: Peptidase B (432 aa).

Residues Lys196 and Asp201 each contribute to the Mn(2+) site. Lys208 is a catalytic residue. Positions 219, 278, and 280 each coordinate Mn(2+). Residue Arg282 is part of the active site.

Belongs to the peptidase M17 family. Homohexamer. The cofactor is Mn(2+).

Its subcellular location is the cytoplasm. The catalysed reaction is Release of an N-terminal amino acid, Xaa, from a peptide or arylamide. Xaa is preferably Glu or Asp but may be other amino acids, including Leu, Met, His, Cys and Gln.. Probably plays an important role in intracellular peptide degradation. This chain is Peptidase B, found in Vibrio parahaemolyticus serotype O3:K6 (strain RIMD 2210633).